The chain runs to 576 residues: Zinc finger protein 791 (576 aa).

The KRAB domain occupies 4-90 (VAFKDVSVSF…AETFSPNLSV (87 aa)). C2H2-type zinc fingers lie at residues 100–122 (YECT…MRSH), 132–154 (YKCK…ERSH), 160–182 (YKCK…EQTH), 188–210 (YECK…ERIH), 216–238 (YECK…ERTH), 244–266 (YACK…MITH), 272–294 (YKCK…ERIH), 300–322 (YTCK…ERIH), 328–350 (YKCK…VRVH), 356–378 (YKCK…ERTH), 384–406 (YECK…KRNH), 412–434 (YECK…MITH), 440–462 (YKCR…ERTH), 468–490 (YECK…KRTH), 496–518 (YECK…MRMH), 524–546 (YKCK…TRIH), and 552–574 (LECK…MRMH).

It belongs to the krueppel C2H2-type zinc-finger protein family.

Its subcellular location is the nucleus. Functionally, may be involved in transcriptional regulation. This is Zinc finger protein 791 (ZNF791) from Pongo abelii (Sumatran orangutan).